A 493-amino-acid chain; its full sequence is Transcript termination protein OPG145 (493 aa).

In terms of domain architecture, Helicase ATP-binding spans 100–256 (MIKLKRPLYI…NSIINIAKLS (157 aa)). 113-120 (LACGFGKT) provides a ligand contact to ATP. Positions 206 to 209 (DESH) match the DESH box motif.

This sequence belongs to the helicase family. Poxviruses subfamily. In terms of assembly, interacts with OPG087. Might be part of a transcription complex composed at least of OPG087, OPG110, and OPG145.

The protein localises to the virion. In terms of biological role, DNA helicase which seems to act as a postreplicative transcription termination factor. Involved in ATP-dependent release of nascent RNA. Forms a stable complex with single-stranded DNA, and to a lesser extent RNA. The protein is Transcript termination protein OPG145 (OPG145) of Variola virus (isolate Human/India/Ind3/1967) (VARV).